The following is a 280-amino-acid chain: Nucleotide-binding protein Mfla_0145 (280 aa).

8–15 is an ATP binding site; sequence GLSGSGKS. GTP is bound at residue 57 to 60; it reads DTRS.

It belongs to the RapZ-like family.

In terms of biological role, displays ATPase and GTPase activities. The protein is Nucleotide-binding protein Mfla_0145 of Methylobacillus flagellatus (strain ATCC 51484 / DSM 6875 / VKM B-1610 / KT).